A 121-amino-acid chain; its full sequence is uncharacterized protein (121 aa).

This is an uncharacterized protein from Aquifex aeolicus (strain VF5).